A 1411-amino-acid polypeptide reads, in one-letter code: Early endosome antigen 1 (1411 aa).

Positions 1–27 are disordered; sequence MLRRILQRTPGRVGSQGSDLDSSATPI. The span at 15–27 shows a compositional bias: polar residues; it reads SQGSDLDSSATPI. The C2H2-type zinc finger occupies 41-64; sequence FICPQCMKSLGSADELFKHYEAVH. Phosphoserine is present on residues serine 52 and serine 70. Positions 74 to 1348 form a coiled coil; it reads GESNLALKRD…IKHTQALNRK (1275 aa). Residues 473–501 form a disordered region; the sequence is VTNSTELQHQLDKTKQQHQEQQALQQSTT. The segment covering 481 to 490 has biased composition (basic and acidic residues); sequence HQLDKTKQQH. The FYVE-type zinc finger occupies 1352-1410; sequence DNEVQNCMACGKGFSVTVRRHHCRQCGNIFCAECSAKNALTPSSKKPVRVCDACFNDLQ. The Zn(2+) site is built by cysteine 1358, cysteine 1361, cysteine 1374, cysteine 1377, cysteine 1382, cysteine 1385, cysteine 1402, and cysteine 1405.

As to quaternary structure, homodimer. Binds STX6. Binds RAB5A, RAB5B, RAB5C and RAB22A that have been activated by GTP-binding. Interacts with RAB31. Interacts with ERBB2. Interacts with SAMD9 and SAMD9L. May interact with PLEKHF2.

It is found in the cytoplasm. The protein resides in the early endosome membrane. In terms of biological role, binds phospholipid vesicles containing phosphatidylinositol 3-phosphate and participates in endosomal trafficking. In Homo sapiens (Human), this protein is Early endosome antigen 1 (EEA1).